A 537-amino-acid polypeptide reads, in one-letter code: Hexosyltransferase GAUT11 (537 aa).

Topologically, residues 1 to 16 (MRRWPVDHRRRGRRRL) are cytoplasmic. A helical; Signal-anchor for type II membrane protein transmembrane segment spans residues 17–37 (SSWIWFLLGSFSVAGLVLFIV). The Lumenal portion of the chain corresponds to 38–537 (QHYHHQQDPS…HPYLQDCVTA (500 aa)). N-linked (GlcNAc...) asparagine glycosylation is found at Asn-66, Asn-247, Asn-299, Asn-403, Asn-436, and Asn-525.

Belongs to the glycosyltransferase 8 family. In terms of assembly, monomer. As to expression, expressed in roots, inflorescences, siliques, seeds, leaves and stems.

It localises to the golgi apparatus membrane. The catalysed reaction is [(1-&gt;4)-alpha-D-galacturonosyl](n) + UDP-alpha-D-galacturonate = [(1-&gt;4)-alpha-D-galacturonosyl](n+1) + UDP + H(+). It participates in glycan metabolism; pectin biosynthesis. Glycosyltransferase involved in pectin and/or xylans biosynthesis in cell walls. Required for the biosynthesis of pectin in seed coat epidermal (SCE) cells. Collaboratively with MUCI70, essential for the accumulation of seed mucilage, a gelatinous wall rich in unbranched rhamnogalacturonan I (RG I), and for shaping the surface morphology of seeds. Catalyzes homogalacturonan (HG) elongation by acting as an HG alpha-1,4 galacturonic acid transferase. The chain is Hexosyltransferase GAUT11 from Arabidopsis thaliana (Mouse-ear cress).